The chain runs to 430 residues: MEKIIVRGGKQLNGSVKMEGAKNAVLPVIAATLLASKGTSVLKNVPNLSDVFTINEVLKYLNADVSFVNDEVTVDATGEITSDAPFEYVRKMRASIVVMGPLLARTGSARVALPGGCAIGSRPVDLHLKGFEAMGAVVKIENGYIEATAEKLVGAKVYLDFPSVGATQNIMMAATLAEGTTVIENVAREPEIVDLANFLNQMGARVIGAGTEVIRIEGVKELTATEHSIIPDRIEAGTFMIAAAITGGNVLIEDAVPEHISSLIAKLEEMGVQIIEEENGIRVIGPDKLKAVDVKTMPHPGFPTDMQSQMMVIQMLSEGTSIMTETVFENRFMHVEEMRRMNADMKIEGHSVIISGPAKLQGAEVAATDLRAAAALILAGLVADGYTQVTELKYLDRGYNNFHGKLQALGADVERVDDSKVDVTNLASLF.

Position 22 to 23 (22 to 23 (KN)) interacts with phosphoenolpyruvate. Residue Arg-93 coordinates UDP-N-acetyl-alpha-D-glucosamine. The active-site Proton donor is Cys-117. 2-(S-cysteinyl)pyruvic acid O-phosphothioketal is present on Cys-117. UDP-N-acetyl-alpha-D-glucosamine-binding positions include 122 to 126 (RPVDL), Asp-305, and Val-327.

It belongs to the EPSP synthase family. MurA subfamily.

The protein localises to the cytoplasm. It carries out the reaction phosphoenolpyruvate + UDP-N-acetyl-alpha-D-glucosamine = UDP-N-acetyl-3-O-(1-carboxyvinyl)-alpha-D-glucosamine + phosphate. The protein operates within cell wall biogenesis; peptidoglycan biosynthesis. Its function is as follows. Cell wall formation. Adds enolpyruvyl to UDP-N-acetylglucosamine. The sequence is that of UDP-N-acetylglucosamine 1-carboxyvinyltransferase 1 from Listeria monocytogenes serovar 1/2a (strain ATCC BAA-679 / EGD-e).